We begin with the raw amino-acid sequence, 243 residues long: UPF0246 protein Spy49_1742 (243 aa).

Belongs to the UPF0246 family.

This is UPF0246 protein Spy49_1742 from Streptococcus pyogenes serotype M49 (strain NZ131).